The chain runs to 496 residues: Alanine aminotransferase 1 (496 aa).

Alanine 2 carries the post-translational modification N-acetylalanine. A Phosphothreonine modification is found at threonine 22. Lysine 314 carries the post-translational modification N6-(pyridoxal phosphate)lysine.

It belongs to the class-I pyridoxal-phosphate-dependent aminotransferase family. Alanine aminotransferase subfamily. In terms of assembly, homodimer. It depends on pyridoxal 5'-phosphate as a cofactor. Mainly expressed in liver, intestine, colon and white adipose tissue.

It localises to the cytoplasm. It catalyses the reaction L-alanine + 2-oxoglutarate = pyruvate + L-glutamate. Its pathway is amino-acid degradation; L-alanine degradation via transaminase pathway; pyruvate from L-alanine: step 1/1. Its function is as follows. Catalyzes the reversible transamination between alanine and 2-oxoglutarate to form pyruvate and glutamate. Participates in cellular nitrogen metabolism and also in liver gluconeogenesis starting with precursors transported from skeletal muscles. This Mus musculus (Mouse) protein is Alanine aminotransferase 1 (Gpt).